The primary structure comprises 407 residues: uncharacterized protein (407 aa).

Positions 145 to 231 (EANRFGRSNS…DPLTSITSDT (87 aa)) are disordered. Positions 158–175 (SNSRSKSSRSRSNNRSKS) are enriched in basic residues. Positions 176-196 (SRSSSTQSKSNNRSNSRSNSK) are enriched in low complexity. The N-acetyltransferase domain occupies 271–407 (IVFETLDQND…NHKIHMEKDI (137 aa)).

The protein localises to the virion. This is an uncharacterized protein from Acanthamoeba polyphaga (Amoeba).